A 205-amino-acid chain; its full sequence is Guanylate kinase (205 aa).

The Guanylate kinase-like domain maps to 6–184 (GLLLVVSGPS…SAKEIEGIIS (179 aa)). An ATP-binding site is contributed by 13 to 20 (GPSGAGKG).

This sequence belongs to the guanylate kinase family.

It is found in the cytoplasm. The catalysed reaction is GMP + ATP = GDP + ADP. Functionally, essential for recycling GMP and indirectly, cGMP. The sequence is that of Guanylate kinase from Clostridioides difficile (strain 630) (Peptoclostridium difficile).